Reading from the N-terminus, the 610-residue chain is UvrABC system protein C (610 aa).

One can recognise a GIY-YIG domain in the interval 13–92 (TLPGVYLMKN…IKQHKPRYNA (80 aa)). The UVR domain maps to 204–239 (KDVLKDLYEEMRLLSEQLEFEKANHLLRTIRYIEKT).

Belongs to the UvrC family. Interacts with UvrB in an incision complex.

The protein resides in the cytoplasm. Functionally, the UvrABC repair system catalyzes the recognition and processing of DNA lesions. UvrC both incises the 5' and 3' sides of the lesion. The N-terminal half is responsible for the 3' incision and the C-terminal half is responsible for the 5' incision. This is UvrABC system protein C from Protochlamydia amoebophila (strain UWE25).